The chain runs to 324 residues: Acetyl-coenzyme A carboxylase carboxyl transferase subunit alpha (324 aa).

Residues 44-297 (LEERAKQLRY…KAALLRNLAE (254 aa)) form the CoA carboxyltransferase C-terminal domain.

It belongs to the AccA family. In terms of assembly, acetyl-CoA carboxylase is a heterohexamer composed of biotin carboxyl carrier protein (AccB), biotin carboxylase (AccC) and two subunits each of ACCase subunit alpha (AccA) and ACCase subunit beta (AccD).

The protein resides in the cytoplasm. The enzyme catalyses N(6)-carboxybiotinyl-L-lysyl-[protein] + acetyl-CoA = N(6)-biotinyl-L-lysyl-[protein] + malonyl-CoA. Its pathway is lipid metabolism; malonyl-CoA biosynthesis; malonyl-CoA from acetyl-CoA: step 1/1. Component of the acetyl coenzyme A carboxylase (ACC) complex. First, biotin carboxylase catalyzes the carboxylation of biotin on its carrier protein (BCCP) and then the CO(2) group is transferred by the carboxyltransferase to acetyl-CoA to form malonyl-CoA. This chain is Acetyl-coenzyme A carboxylase carboxyl transferase subunit alpha, found in Thermosynechococcus vestitus (strain NIES-2133 / IAM M-273 / BP-1).